The sequence spans 430 residues: Tol-Pal system protein TolB (430 aa).

The first 21 residues, methionine 1–alanine 21, serve as a signal peptide directing secretion.

The protein belongs to the TolB family. In terms of assembly, the Tol-Pal system is composed of five core proteins: the inner membrane proteins TolA, TolQ and TolR, the periplasmic protein TolB and the outer membrane protein Pal. They form a network linking the inner and outer membranes and the peptidoglycan layer.

It is found in the periplasm. In terms of biological role, part of the Tol-Pal system, which plays a role in outer membrane invagination during cell division and is important for maintaining outer membrane integrity. TolB occupies a key intermediary position in the Tol-Pal system because it communicates directly with both membrane-embedded components, Pal in the outer membrane and TolA in the inner membrane. This Escherichia coli O139:H28 (strain E24377A / ETEC) protein is Tol-Pal system protein TolB.